A 335-amino-acid chain; its full sequence is UPF0324 membrane protein gbs1193 (335 aa).

9 consecutive transmembrane segments (helical) span residues 20–42, 57–79, 84–106, 116–138, 151–173, 210–232, 253–275, 285–304, and 311–333; these read SWLL…IGII, IAFT…LNLM, VGIS…AYVL, IATL…TAPV, SVIF…FIGL, GATI…LSIY, VLYF…SLRI, FFIV…SKLI, and ILLG…AILG.

It belongs to the UPF0324 family.

The protein localises to the cell membrane. In Streptococcus agalactiae serotype III (strain NEM316), this protein is UPF0324 membrane protein gbs1193.